The chain runs to 156 residues: MNFNATLIGQTVAFIIFVWFCMKFVWPPLMNAIEERQKRIADGLADADRAVKDLELAQAKATDQLKEAKVTANEIIEQANKRKAQIVEEAKTEADAERAKIIAQGKAEIEAERNRVKEDLRKQVATLAIMGAEKILERSIDPAAHSDIVNKLVAEI.

A helical transmembrane segment spans residues 7–27; that stretch reads LIGQTVAFIIFVWFCMKFVWP.

This sequence belongs to the ATPase B chain family. F-type ATPases have 2 components, F(1) - the catalytic core - and F(0) - the membrane proton channel. F(1) has five subunits: alpha(3), beta(3), gamma(1), delta(1), epsilon(1). F(0) has three main subunits: a(1), b(2) and c(10-14). The alpha and beta chains form an alternating ring which encloses part of the gamma chain. F(1) is attached to F(0) by a central stalk formed by the gamma and epsilon chains, while a peripheral stalk is formed by the delta and b chains.

The protein localises to the cell inner membrane. Its function is as follows. F(1)F(0) ATP synthase produces ATP from ADP in the presence of a proton or sodium gradient. F-type ATPases consist of two structural domains, F(1) containing the extramembraneous catalytic core and F(0) containing the membrane proton channel, linked together by a central stalk and a peripheral stalk. During catalysis, ATP synthesis in the catalytic domain of F(1) is coupled via a rotary mechanism of the central stalk subunits to proton translocation. Functionally, component of the F(0) channel, it forms part of the peripheral stalk, linking F(1) to F(0). The polypeptide is ATP synthase subunit b (Shewanella baltica (strain OS185)).